The primary structure comprises 307 residues: Methionyl-tRNA formyltransferase (307 aa).

110–113 provides a ligand contact to (6S)-5,6,7,8-tetrahydrofolate; sequence SLLP.

Belongs to the Fmt family.

The enzyme catalyses L-methionyl-tRNA(fMet) + (6R)-10-formyltetrahydrofolate = N-formyl-L-methionyl-tRNA(fMet) + (6S)-5,6,7,8-tetrahydrofolate + H(+). Its function is as follows. Attaches a formyl group to the free amino group of methionyl-tRNA(fMet). The formyl group appears to play a dual role in the initiator identity of N-formylmethionyl-tRNA by promoting its recognition by IF2 and preventing the misappropriation of this tRNA by the elongation apparatus. The polypeptide is Methionyl-tRNA formyltransferase (Chromobacterium violaceum (strain ATCC 12472 / DSM 30191 / JCM 1249 / CCUG 213 / NBRC 12614 / NCIMB 9131 / NCTC 9757 / MK)).